Consider the following 212-residue polypeptide: Imidazole glycerol phosphate synthase subunit HisH (212 aa).

The Glutamine amidotransferase type-1 domain maps to 3–212 (DIAIVDYGMG…LGNFVRWKPV (210 aa)). Residue Cys-82 is the Nucleophile of the active site. Catalysis depends on residues His-191 and Glu-193.

Heterodimer of HisH and HisF.

The protein localises to the cytoplasm. The catalysed reaction is 5-[(5-phospho-1-deoxy-D-ribulos-1-ylimino)methylamino]-1-(5-phospho-beta-D-ribosyl)imidazole-4-carboxamide + L-glutamine = D-erythro-1-(imidazol-4-yl)glycerol 3-phosphate + 5-amino-1-(5-phospho-beta-D-ribosyl)imidazole-4-carboxamide + L-glutamate + H(+). It carries out the reaction L-glutamine + H2O = L-glutamate + NH4(+). Its pathway is amino-acid biosynthesis; L-histidine biosynthesis; L-histidine from 5-phospho-alpha-D-ribose 1-diphosphate: step 5/9. Functionally, IGPS catalyzes the conversion of PRFAR and glutamine to IGP, AICAR and glutamate. The HisH subunit catalyzes the hydrolysis of glutamine to glutamate and ammonia as part of the synthesis of IGP and AICAR. The resulting ammonia molecule is channeled to the active site of HisF. In Nitrosospira multiformis (strain ATCC 25196 / NCIMB 11849 / C 71), this protein is Imidazole glycerol phosphate synthase subunit HisH.